A 132-amino-acid polypeptide reads, in one-letter code: UPF0292 protein PYRAB04740 (132 aa).

The Toprim domain occupies 20–100 (DGAIIVEGPR…KVDTETRRSL (81 aa)). Mg(2+) contacts are provided by glutamate 26, aspartate 69, and aspartate 71.

This sequence belongs to the UPF0292 family. Mg(2+) is required as a cofactor.

This is UPF0292 protein PYRAB04740 from Pyrococcus abyssi (strain GE5 / Orsay).